Reading from the N-terminus, the 145-residue chain is Large ribosomal subunit protein uL15 (145 aa).

2 stretches are compositionally biased toward basic residues: residues 1–13 and 19–29; these read MVRE…RGGH and KAGRGKGKKGG. The segment at 1-33 is disordered; sequence MVRERTKKLRGGHYGRGMKAGRGKGKKGGRGNA.

It belongs to the universal ribosomal protein uL15 family. In terms of assembly, part of the 50S ribosomal subunit.

Binds to the 23S rRNA. This chain is Large ribosomal subunit protein uL15, found in Thermoplasma volcanium (strain ATCC 51530 / DSM 4299 / JCM 9571 / NBRC 15438 / GSS1).